The sequence spans 373 residues: sn-glycerol-3-phosphate import ATP-binding protein UgpC 2 (373 aa).

The ABC transporter domain occupies 4–234 (IDIRQVRKSY…PASTFVASFI (231 aa)). ATP is bound at residue 36–43 (GPSGCGKS).

It belongs to the ABC transporter superfamily. sn-glycerol-3-phosphate importer (TC 3.A.1.1.3) family. In terms of assembly, the complex is composed of two ATP-binding proteins (UgpC), two transmembrane proteins (UgpA and UgpE) and a solute-binding protein (UgpB).

Its subcellular location is the cell inner membrane. It carries out the reaction sn-glycerol 3-phosphate(out) + ATP + H2O = sn-glycerol 3-phosphate(in) + ADP + phosphate + H(+). Part of the ABC transporter complex UgpBAEC involved in sn-glycerol-3-phosphate (G3P) import. Responsible for energy coupling to the transport system. The protein is sn-glycerol-3-phosphate import ATP-binding protein UgpC 2 of Agrobacterium fabrum (strain C58 / ATCC 33970) (Agrobacterium tumefaciens (strain C58)).